Here is a 600-residue protein sequence, read N- to C-terminus: NADH-quinone oxidoreductase subunit C/D (600 aa).

The interval 1-190 is NADH dehydrogenase I subunit C; it reads MVNNMTDLTA…DPFELTKAKQ (190 aa). The NADH dehydrogenase I subunit D stretch occupies residues 214–600; sequence DFMFLNLGPN…IDFVMSDVDR (387 aa).

The protein in the N-terminal section; belongs to the complex I 30 kDa subunit family. It in the C-terminal section; belongs to the complex I 49 kDa subunit family. NDH-1 is composed of 13 different subunits. Subunits NuoB, CD, E, F, and G constitute the peripheral sector of the complex.

It is found in the cell inner membrane. The enzyme catalyses a quinone + NADH + 5 H(+)(in) = a quinol + NAD(+) + 4 H(+)(out). Functionally, NDH-1 shuttles electrons from NADH, via FMN and iron-sulfur (Fe-S) centers, to quinones in the respiratory chain. The immediate electron acceptor for the enzyme in this species is believed to be ubiquinone. Couples the redox reaction to proton translocation (for every two electrons transferred, four hydrogen ions are translocated across the cytoplasmic membrane), and thus conserves the redox energy in a proton gradient. This is NADH-quinone oxidoreductase subunit C/D from Citrobacter koseri (strain ATCC BAA-895 / CDC 4225-83 / SGSC4696).